Consider the following 447-residue polypeptide: GTPase Der (447 aa).

2 EngA-type G domains span residues 3–167 (PVIA…FAER) and 181–354 (TRIA…AAAM). Residues 9-16 (GRPNVGKS), 56-60 (DTGGF), 119-122 (NKAE), 187-194 (GRPNVGKS), 234-238 (DTAGL), and 299-302 (NKWD) each bind GTP. Residues 355 to 439 (VKLPTPKLTR…PLRIEFRTNK (85 aa)) enclose the KH-like domain.

It belongs to the TRAFAC class TrmE-Era-EngA-EngB-Septin-like GTPase superfamily. EngA (Der) GTPase family. In terms of assembly, associates with the 50S ribosomal subunit.

In terms of biological role, GTPase that plays an essential role in the late steps of ribosome biogenesis. The chain is GTPase Der from Ralstonia nicotianae (strain ATCC BAA-1114 / GMI1000) (Ralstonia solanacearum).